Reading from the N-terminus, the 650-residue chain is Secretin OutD (650 aa).

Positions 1–18 are cleaved as a signal peptide; that stretch reads MLLLSGSVLLMASSLAWS. An N0 region spans residues 20–115; the sequence is EFSASFKGTD…LATDRQPGIG (96 aa). The interval 117–181 is N1; that stretch reads EVVTRVVPVN…TIVERVDQTG (65 aa). The N2 stretch occupies residues 182 to 255; the sequence is DRNVTTIPLS…MVKQLDRQQA (74 aa). Residues 258-330 are N3; the sequence is GNTKVIYLKY…DLEQVIAQLD (73 aa). The interval 335–585 is secretin; that stretch reads QVLVEAIIAE…LFIRPSIIRD (251 aa). Residues 587-650 form a s domain region; the sequence is SQFQSASASK…IVAFYPAGGK (64 aa).

It belongs to the bacterial secretin family. GSP D subfamily. Forms a cylindrical channel with 15 subunits.

It localises to the cell outer membrane. Involved in a type II secretion system (T2SS, formerly general secretion pathway, GSP) for the export of proteins. Required for the translocation of the multiple pectic enzymes. This subunit forms the outer membrane channel. This Pectobacterium carotovorum subsp. carotovorum (Erwinia carotovora subsp. carotovora) protein is Secretin OutD (outD).